Here is a 146-residue protein sequence, read N- to C-terminus: Ferredoxin-type protein FwdE (146 aa).

2 4Fe-4S ferredoxin-type domains span residues 90 to 115 (IKLFWDENSCIACGSCLGCAALTLDN) and 116 to 145 (FTVGIDEDTCHLCASCIFRCPTNSLKFIKE). Residues Cys-125, Cys-128, Cys-131, and Cys-135 each contribute to the [4Fe-4S] cluster site.

The cofactor is [4Fe-4S] cluster.

This is Ferredoxin-type protein FwdE (fwdE) from Methanocaldococcus jannaschii (strain ATCC 43067 / DSM 2661 / JAL-1 / JCM 10045 / NBRC 100440) (Methanococcus jannaschii).